The following is a 289-amino-acid chain: Phospholipase A1 (289 aa).

Positions 1–20 (MRAILRGLLPATLLPLAAYA) are cleaved as a signal peptide. Residues 21–52 (QEATIKEVHDAPAVRGSIIANMLQEHDNPFTL) are Periplasmic-facing. Residues 53–65 (YPYDTNYLIYTNT) form a beta stranded membrane-spanning segment. The Extracellular segment spans residues 66–84 (SDLNKEAISTYNWSENARK). A beta stranded membrane pass occupies residues 85-99 (DEVKFQLSLAFPLWR). Topologically, residues 100 to 105 (GILGPN) are periplasmic. The beta stranded transmembrane segment at 106 to 118 (SVLGASYTQKSWW) threads the bilayer. The Extracellular segment spans residues 119-128 (QLSNSKESSP). Ser126 contacts Ca(2+). A beta stranded transmembrane segment spans residues 129–148 (FRETNYEPQLFLGFATDYRF). The Periplasmic segment spans residues 149 to 150 (AG). Residues 151 to 164 (WTLRDVEMGYNHDS) traverse the membrane as a beta stranded segment. His162 acts as the Proton acceptor in catalysis. Residue Ser164 is the Nucleophile of the active site. The Extracellular portion of the chain corresponds to 165–173 (NGRSDPTSR). Residues Arg167 and Ser172 each contribute to the Ca(2+) site. A beta stranded transmembrane segment spans residues 174-186 (SWNRLYTRLMAEN). The Periplasmic segment spans residues 187–188 (GN). Residues 189-198 (WLVEVKPWYV) traverse the membrane as a beta stranded segment. The Extracellular segment spans residues 199–216 (IGSTDDNPDITKYMGYYQ). Asp204 contacts Ca(2+). A beta stranded membrane pass occupies residues 217 to 223 (LKIGYHL). Over 224–225 (GE) the chain is Periplasmic. The beta stranded transmembrane segment at 226–234 (AVLSAKGQY) threads the bilayer. Residues 235–241 (NWNTGYG) lie on the Extracellular side of the membrane. A beta stranded membrane pass occupies residues 242–250 (GAEVGLSYP). Residues 251–255 (VTKHV) lie on the Periplasmic side of the membrane. Residues 256 to 265 (RLYTQVYSGY) traverse the membrane as a beta stranded segment. Residues 266-274 (GESLIDYNF) are Extracellular-facing. The chain crosses the membrane as a beta stranded span at residues 275–286 (NQTRVGVGVMLN). Residues 287–289 (DIF) are Periplasmic-facing.

This sequence belongs to the phospholipase A1 family. As to quaternary structure, homodimer; dimerization is reversible, and the dimeric form is the active one. Requires Ca(2+) as cofactor.

It is found in the cell outer membrane. It carries out the reaction a 1,2-diacyl-sn-glycero-3-phosphocholine + H2O = a 2-acyl-sn-glycero-3-phosphocholine + a fatty acid + H(+). It catalyses the reaction a 1,2-diacyl-sn-glycero-3-phosphocholine + H2O = a 1-acyl-sn-glycero-3-phosphocholine + a fatty acid + H(+). Hydrolysis of phosphatidylcholine with phospholipase A2 (EC 3.1.1.4) and phospholipase A1 (EC 3.1.1.32) activities. The chain is Phospholipase A1 (pldA) from Salmonella typhi.